A 723-amino-acid chain; its full sequence is Threonine--tRNA ligase, mitochondrial (723 aa).

A Phosphoserine modification is found at serine 57. Residues 64–126 (RTIKISLPEG…ETDCHLRFLT (63 aa)) form the TGS domain.

This sequence belongs to the class-II aminoacyl-tRNA synthetase family. Homodimer.

Its subcellular location is the mitochondrion matrix. It catalyses the reaction tRNA(Thr) + L-threonine + ATP = L-threonyl-tRNA(Thr) + AMP + diphosphate + H(+). Functionally, catalyzes the attachment of threonine to tRNA(Thr) in a two-step reaction: threonine is first activated by ATP to form Thr-AMP and then transferred to the acceptor end of tRNA(Thr). Also edits incorrectly charged tRNA(Thr) via its editing domain. This chain is Threonine--tRNA ligase, mitochondrial (Tars2), found in Rattus norvegicus (Rat).